Consider the following 1023-residue polypeptide: MSWLRSSPLRQSFSKSGNNSNSNGGGSANDRSRSGAGGGGLSSVIRPFDATECDPKACYDSFCIHWQQAYEIIQRSESHDDVLGVVTHLDHMVTLLLVELHHCNKLSLPGQPTPPAPCLEHLLSENLLDKLYEWGIKTGRYANAVRLEQLKLYEQLVSHSRHQLLVHEPFLRPLLKLLASSQNEIYPPDVEKRLVILLNQLCVVLMQNVHLLDLFFFSTTQTQQSHHASNGGHTNFIIFSLLIPYVHREGSLGHQARDALLLCMALSQKNSNVGTYIATYSSICPVLVTGLGGLYSRLPNQIEIKTVDWYRITTDDVTELPELTLFMNSLEFCNAVVQVAHTMIRQQLLDFLYQGFLVPVLGPAILQTNVESQVSAMAYFDLIVRSITEPGLIQIVIRFLLDEEKFDGQRILDVLVERLNSNDSRLCMVTLSLFDSLLSLNCEDIMLELMLKYLLHCKHVPISHRYKINRVDPYTQAVEYFLNITPDIMKKVNSVLSINNGGLASNGASSAAAGQPAVVATAKTIGANWNHYGLNTTTGETLLANYQAYLLDARNRIVQCKHACDQWNNVYRYQKLSKANFTGAPNVAANGAGSSGQNSLVNPEDVRALKQLDSLQSIGDSSGYESLNVFSQTSNDLVAPGTMPQEPQLKQQQQRIDAWKVSSVREEPIGDLDLSEDLFAQGTVSLGPFLTAIWGKLQTFTSNCLYVNLHLTGLITHLTLFPLPLLHSILLRPDIPTTSDTPSFHQVLKILKQQIDAELPDTDESLEIVDMARSFLVDREFRLVNMRKNAIESAASGKLLNGGGSSMTSSLSQTTPMQLTPSSSYDPFKRQDGKRKSISNSFSNIFRRPGSVGKNPPSFPSRSSNSNGLNHSPNGRQQPQSYTPASMNVPSPVGQQQHQHQSVSSVMPPSGLLIGSSRRESREAETQFMSIDTSSLQAGGINAPSGHVSNGSNGNDLLHPHSLEHGLTSYSVGSERQLNLAIGAVLLDEWLRELSAVTQEQCIMMLSEQVQQQQQQPPARTAS.

Composition is skewed to polar residues over residues 1 to 13 (MSWL…RQSF), 806 to 825 (SMTS…SSSY), and 868 to 888 (GLNH…ASMN). Disordered stretches follow at residues 1–39 (MSWL…AGGG) and 797–927 (GKLL…AETQ). The segment covering 889–906 (VPSPVGQQQHQHQSVSSV) has biased composition (low complexity).

This sequence belongs to the FHIP family.

The protein is FHIP family protein AGAP011705 of Anopheles gambiae (African malaria mosquito).